The sequence spans 1086 residues: Phosphinothricin tripeptide synthetase PhsC (1086 aa).

The segment at 22–43 (RLRAAAAPGPDPAIPRRPDDDG) is disordered. The condensation stretch occupies residues 45–484 (VPLSFAQHRL…LAALPVLTRD (440 aa)). The adenylation stretch occupies residues 510–901 (LEDSARRHPD…GRTDHQVKLR (392 aa)). The tract at residues 983 to 1007 (GKLDREALPDPLAQSGDTAGNRPPL) is disordered. A Carrier domain is found at 1006–1081 (PLLDPVEERI…GLARSVSAER (76 aa)). The residue at position 1041 (serine 1041) is an O-(pantetheine 4'-phosphoryl)serine.

Belongs to the NRP synthetase family. It depends on pantetheine 4'-phosphate as a cofactor.

The catalysed reaction is holo-[peptidyl-carrier protein] + L-alanine + ATP = L-alanyl-[peptidyl-carrier protein] + AMP + diphosphate. Its pathway is secondary metabolite biosynthesis; bialaphos biosynthesis. Functionally, involved in the biosynthesis of phosphinothricin tripeptide (PTT), also known as bialaphos (BA), a natural-product antibiotic and potent herbicide. Adenylates L-alanine and loads it onto a peptidyl carrier domain via a thioester linkage to the phosphopanthetheine moiety. Shows weaker activity with aminobutyric acid and L-serine. This Streptomyces viridochromogenes (strain DSM 40736 / JCM 4977 / BCRC 1201 / Tue 494) protein is Phosphinothricin tripeptide synthetase PhsC.